The following is a 156-amino-acid chain: ATP synthase subunit b (156 aa).

Residues 11 to 31 form a helical membrane-spanning segment; sequence AIAFVLFVIFCMKYVWPPIMA.

It belongs to the ATPase B chain family. F-type ATPases have 2 components, F(1) - the catalytic core - and F(0) - the membrane proton channel. F(1) has five subunits: alpha(3), beta(3), gamma(1), delta(1), epsilon(1). F(0) has three main subunits: a(1), b(2) and c(10-14). The alpha and beta chains form an alternating ring which encloses part of the gamma chain. F(1) is attached to F(0) by a central stalk formed by the gamma and epsilon chains, while a peripheral stalk is formed by the delta and b chains.

The protein resides in the cell inner membrane. Functionally, f(1)F(0) ATP synthase produces ATP from ADP in the presence of a proton or sodium gradient. F-type ATPases consist of two structural domains, F(1) containing the extramembraneous catalytic core and F(0) containing the membrane proton channel, linked together by a central stalk and a peripheral stalk. During catalysis, ATP synthesis in the catalytic domain of F(1) is coupled via a rotary mechanism of the central stalk subunits to proton translocation. Its function is as follows. Component of the F(0) channel, it forms part of the peripheral stalk, linking F(1) to F(0). In Yersinia pseudotuberculosis serotype O:1b (strain IP 31758), this protein is ATP synthase subunit b.